Consider the following 202-residue polypeptide: Ras-related protein RABD2c (202 aa).

Residues 15 to 23 (GDSGVGKSC), 33 to 40 (YLDSYIST), 63 to 67 (DTAGQ), 121 to 124 (NKCD), and 151 to 153 (SAK) each bind GTP. The Effector region signature appears at 37–45 (YISTIGVDF). The tract at residues 174–202 (ASQPAGGSKPPTVQIRGQPVNQQSGCCSS) is disordered. A compositionally biased stretch (polar residues) spans 192 to 202 (PVNQQSGCCSS). S-geranylgeranyl cysteine attachment occurs at residues Cys199 and Cys200.

This sequence belongs to the small GTPase superfamily. Rab family.

The protein resides in the cell membrane. Its subcellular location is the golgi apparatus. It is found in the trans-Golgi network membrane. The protein localises to the golgi apparatus membrane. Its function is as follows. Protein transport. Regulator of membrane traffic from the Golgi apparatus towards the endoplasmic reticulum (ER). This chain is Ras-related protein RABD2c (RABD2C), found in Arabidopsis thaliana (Mouse-ear cress).